Here is a 196-residue protein sequence, read N- to C-terminus: Large ribosomal subunit protein uL5 (196 aa).

This sequence belongs to the universal ribosomal protein uL5 family. In terms of assembly, part of the 50S ribosomal subunit; part of the 5S rRNA/L5/L18/L25 subcomplex. Contacts the 5S rRNA and the P site tRNA. Forms a bridge to the 30S subunit in the 70S ribosome.

Functionally, this is one of the proteins that bind and probably mediate the attachment of the 5S RNA into the large ribosomal subunit, where it forms part of the central protuberance. In the 70S ribosome it contacts protein S13 of the 30S subunit (bridge B1b), connecting the 2 subunits; this bridge is implicated in subunit movement. Contacts the P site tRNA; the 5S rRNA and some of its associated proteins might help stabilize positioning of ribosome-bound tRNAs. The protein is Large ribosomal subunit protein uL5 of Prosthecochloris aestuarii (strain DSM 271 / SK 413).